The primary structure comprises 188 residues: VQ motif-containing protein 18 (188 aa).

3 disordered regions span residues 1-20, 58-92, and 157-188; these read MEIT…VSMN, LTGK…HQPV, and GFIF…HNSS. A VQ motif is present at residues 51 to 60; sequence FRSLVQSLTG. Low complexity predominate over residues 161 to 179; it reads NNNNNNNNNNNNNNNNNTN.

The protein resides in the nucleus. In terms of biological role, may function as positive regulator of plant growth. The polypeptide is VQ motif-containing protein 18 (Arabidopsis thaliana (Mouse-ear cress)).